Here is a 500-residue protein sequence, read N- to C-terminus: Alpha-L-arabinofuranosidase (500 aa).

The N-terminal stretch at 1 to 21 is a signal peptide; sequence MLSNARIIAAGCIAAGSLVAA. N-linked (GlcNAc...) asparagine glycosylation occurs at asparagine 467.

Belongs to the glycosyl hydrolase 54 family.

It catalyses the reaction Hydrolysis of terminal non-reducing alpha-L-arabinofuranoside residues in alpha-L-arabinosides.. It participates in glycan metabolism; L-arabinan degradation. In Hypocrea jecorina (Trichoderma reesei), this protein is Alpha-L-arabinofuranosidase (abf1).